The chain runs to 833 residues: Putative GPI inositol-deacylase C (833 aa).

The active site involves Ser-130. Residues Asn-191 and Asn-456 are each glycosylated (N-linked (GlcNAc...) asparagine). The next 5 membrane-spanning stretches (helical) occupy residues 521–541 (ILFISLPSAILYAIFLVQFHA), 560–580 (YLLTSCLAGSGIAYLTGLSQV), 617–637 (VLAPIFTVFSTGMVVLITELV), 672–692 (TVFVAVISVLVLLFFPYQLAF), and 723–743 (TICVLMTWTCIINAPVLAVWI). N-linked (GlcNAc...) asparagine glycosylation is present at Asn-772. The helical transmembrane segment at 787 to 807 (LLLAYTSLHCLFYGMMQAFMI) threads the bilayer.

It belongs to the GPI inositol-deacylase family.

Its subcellular location is the endoplasmic reticulum membrane. Its function is as follows. Involved in inositol deacylation of GPI-anchored proteins which plays important roles in the quality control and ER-associated degradation of GPI-anchored proteins. In Yarrowia lipolytica (strain CLIB 122 / E 150) (Yeast), this protein is Putative GPI inositol-deacylase C (BST1C).